A 612-amino-acid chain; its full sequence is Dihydroxy-acid dehydratase (612 aa).

D81 is a Mg(2+) binding site. C122 serves as a coordination point for [2Fe-2S] cluster. The Mg(2+) site is built by D123 and K124. K124 carries the N6-carboxylysine modification. C195 is a [2Fe-2S] cluster binding site. Position 492 (E492) interacts with Mg(2+). S518 functions as the Proton acceptor in the catalytic mechanism.

The protein belongs to the IlvD/Edd family. In terms of assembly, homodimer. Requires [2Fe-2S] cluster as cofactor. It depends on Mg(2+) as a cofactor.

It carries out the reaction (2R)-2,3-dihydroxy-3-methylbutanoate = 3-methyl-2-oxobutanoate + H2O. The catalysed reaction is (2R,3R)-2,3-dihydroxy-3-methylpentanoate = (S)-3-methyl-2-oxopentanoate + H2O. The protein operates within amino-acid biosynthesis; L-isoleucine biosynthesis; L-isoleucine from 2-oxobutanoate: step 3/4. It functions in the pathway amino-acid biosynthesis; L-valine biosynthesis; L-valine from pyruvate: step 3/4. Functions in the biosynthesis of branched-chain amino acids. Catalyzes the dehydration of (2R,3R)-2,3-dihydroxy-3-methylpentanoate (2,3-dihydroxy-3-methylvalerate) into 2-oxo-3-methylpentanoate (2-oxo-3-methylvalerate) and of (2R)-2,3-dihydroxy-3-methylbutanoate (2,3-dihydroxyisovalerate) into 2-oxo-3-methylbutanoate (2-oxoisovalerate), the penultimate precursor to L-isoleucine and L-valine, respectively. The polypeptide is Dihydroxy-acid dehydratase (Kocuria rhizophila (strain ATCC 9341 / DSM 348 / NBRC 103217 / DC2201)).